The primary structure comprises 631 residues: MLYHEKFDVIVVGGGHAGTEAALASARTGQSTLLLTHNIDTLGQMSCNPAIGGIGKGHLVKEVDAMGGLMAQAIDHAGIQFRTLNASKGPAVRATRAQADRALYKAFVRNVLENTPNLTLFQQSVDDLIVEQDQVVGVVTQMGLKFRANAVVLTVGTFLGGKIHIGMESSSGGRAGDPPSIALADRLRDLPFRVDRLKTGTPPRIDARSVDFSELEVQHGDNPTPVFSFMGNRAQQPRQIPCYITHTNENTHDVIRANLDRSPMYAGVIEGIGPRYCPSIEDKVMRFADKNSHQIFIEPEGLTTHELYPNGISTSLPFDVQVKIVHSMKGFENAHIVRPGYAIEYDFFDPRDLKLTYETKFIKGLFFAGQINGTTGYEEAAAQGLMAGLNASLFTQGKEGWSPRRDQAYMGVLIDDLSTMGTKEPYRMFTSRAEYRLLLREDNADIRLTEKSRELGLVDDARWTRFNEKMENMEKERQRLKETWINPKSEDIDQLNQILKTPMSREASGEDLLRRPEMTYSQLTSLDRFGPALEDQQASEQVEIQVKYDGYIQRQQDEIEKSLRHENTKLPADIDYSKVKGLSNEVVLKLTTAKPDSIGIASRISGITPAAISILLVYLKKHGLLKKGEEA.

FAD contacts are provided by residues 13–18 (GGGHAG), V125, and S180. 273–287 (GPRYCPSIEDKVMRF) is a binding site for NAD(+). Q370 provides a ligand contact to FAD.

The protein belongs to the MnmG family. In terms of assembly, homodimer. Heterotetramer of two MnmE and two MnmG subunits. It depends on FAD as a cofactor.

The protein resides in the cytoplasm. Functionally, NAD-binding protein involved in the addition of a carboxymethylaminomethyl (cmnm) group at the wobble position (U34) of certain tRNAs, forming tRNA-cmnm(5)s(2)U34. The polypeptide is tRNA uridine 5-carboxymethylaminomethyl modification enzyme MnmG (Vibrio atlanticus (strain LGP32) (Vibrio splendidus (strain Mel32))).